Consider the following 1202-residue polypeptide: PAN2-PAN3 deadenylation complex catalytic subunit PAN2 (1202 aa).

WD repeat units lie at residues 153-193 (DENE…QKYA), 195-231 (ETPG…VEHE), 244-280 (VHGN…AITP), and 328-367 (PVGP…SFNP). Residues 368–485 (YSRETEFALP…VGREEEPHLH (118 aa)) are linker. Residues 486–924 (MVSKKYRKVT…VPAILYYVKR (439 aa)) form the USP domain. Ser791 is modified (phosphoserine). Positions 975–1147 (VGLDAEFVTL…EDARTALQLY (173 aa)) constitute an Exonuclease domain. A divalent metal cation contacts are provided by Asp978, Glu980, Asp1087, and Asp1139. Residue Ser1189 is modified to Phosphoserine.

This sequence belongs to the peptidase C19 family. PAN2 subfamily. Forms a heterotrimer with an asymmetric homodimer of the regulatory subunit PAN3 to form the poly(A)-nuclease (PAN) deadenylation complex. Interacts with PAN3 isoform 1/Pan3L and isoform 3/Pan3S. Interacts with ZFP36. A divalent metal cation is required as a cofactor.

Its subcellular location is the cytoplasm. The protein resides in the P-body. It localises to the nucleus. It carries out the reaction Exonucleolytic cleavage of poly(A) to 5'-AMP.. Positively regulated by the regulatory subunit PAN3. Functionally, catalytic subunit of the poly(A)-nuclease (PAN) deadenylation complex, one of two cytoplasmic mRNA deadenylases involved in general and miRNA-mediated mRNA turnover. PAN specifically shortens poly(A) tails of RNA and the activity is stimulated by poly(A)-binding protein (PABP). PAN deadenylation is followed by rapid degradation of the shortened mRNA tails by the CCR4-NOT complex. Deadenylated mRNAs are then degraded by two alternative mechanisms, namely exosome-mediated 3'-5' exonucleolytic degradation, or deadenylation-dependent mRNA decaping and subsequent 5'-3' exonucleolytic degradation by XRN1. Also acts as an important regulator of the HIF1A-mediated hypoxic response. Required for HIF1A mRNA stability independent of poly(A) tail length regulation. The polypeptide is PAN2-PAN3 deadenylation complex catalytic subunit PAN2 (Homo sapiens (Human)).